The primary structure comprises 532 residues: uncharacterized protein (532 aa).

The next 14 helical transmembrane spans lie at 25 to 45 (ITKI…GDVG), 65 to 85 (SGFP…NHHT), 109 to 129 (AVPI…QVAA), 134 to 154 (LFPF…MLPS), 179 to 199 (KGAS…AGSL), 203 to 223 (IILG…RQNE), 248 to 268 (LLLF…SGGE), 302 to 322 (VPYI…EKIT), 344 to 364 (KPVN…QVFS), 371 to 391 (SLAV…FPAI), 392 to 412 (AVGA…PRYG), 425 to 445 (AAVA…DKLR), 459 to 479 (SAVL…TGRG), and 494 to 514 (AVFI…LNSV).

This sequence belongs to the polysaccharide synthase family.

The protein localises to the cell membrane. This is an uncharacterized protein from Bacillus subtilis (strain 168).